A 379-amino-acid polypeptide reads, in one-letter code: Transcription termination factor 1a, mitochondrial (379 aa).

A mitochondrion-targeting transit peptide spans 1–37 (MASRNIWCVRRNFLFDLRDWMLQYSAEVFLKSISFRP). Interaction with DNA stretches follow at residues 151-152 (RS), 229-233 (QSTKR), 306-313 (SEKKFNDK), 337-340 (SINT), and 366-373 (SQRRYEAK).

It belongs to the mTERF family. Monomer. Post-translationally, phosphoprotein with mostly four phosphate groups. While the DNA-binding activity is unaffected by the phosphorylation state, only the phosphorylated form of the protein is active for termination activity. Functioning seems to be regulated by phosphorylation. As to expression, predominantly expressed in heart and liver, with extremely low levels in other tissues. Expressed strongly in the heart and at lower levels in brain, liver and kidney.

It localises to the mitochondrion. Its function is as follows. Transcription termination factor. Binds to a 28 bp region within the tRNA(Leu(uur)) gene at a position immediately adjacent to and downstream of the 16S rRNA gene; this region comprises a tridecamer sequence critical for directing accurate termination. Binds DNA along the major grove and promotes DNA bending and partial unwinding. Promotes base flipping. Transcription termination activity appears to be polarized with highest specificity for transcripts initiated on the light strand. This chain is Transcription termination factor 1a, mitochondrial (Mterf1a), found in Mus musculus (Mouse).